A 488-amino-acid polypeptide reads, in one-letter code: Metalloreductase STEAP3 (488 aa).

The Cytoplasmic portion of the chain corresponds to 1–207; sequence MSGEMDKPLI…AREVEAIPLR (207 aa). A phosphoserine mark is found at Ser11, Ser17, and Ser20. NADP(+) is bound by residues 36–39, 58–59, 91–98, Asn116, and Ala151; these read SGDF, SR, and VFREHYSS. 2 residues coordinate FAD: Trp152 and Asp160. The helical transmembrane segment at 208-228 threads the bilayer; it reads LLPSWKVPTLLALGLFVCFYA. Tyr229 is a Fe(3+) binding site. Topologically, residues 229-258 are vesicular; the sequence is YNFIRDVLQPYIRKDENKFYKMPLSVVNTT. A glycan (N-linked (GlcNAc...) asparagine) is linked at Asn256. The helical transmembrane segment at 259-279 threads the bilayer; the sequence is LPCVAYVLLSLVYLPGVLAAA. Residues 259–407 form the Ferric oxidoreductase domain; it reads LPCVAYVLLS…LGFVALMLST (149 aa). At 280–304 the chain is on the cytoplasmic side; sequence LQLRRGTKYQRFPDWLDHWLQHRKQ. Positions 281, 302, and 303 each coordinate FAD. The helical transmembrane segment at 305 to 325 threads the bilayer; it reads IGLLSFFFAMLHALYSFCLPL. His316 provides a ligand contact to heme b. Fe(3+) is bound at residue Tyr319. Residues 326 to 358 lie on the Vesicular side of the membrane; that stretch reads RRSHRYDLVNLAVKQVLANKSRLWVEEEVWRME. The helical transmembrane segment at 359–379 threads the bilayer; sequence IYLSLGVLALGMLSLLAVTSI. Ser378 is a binding site for FAD. At 380-390 the chain is on the cytoplasmic side; the sequence is PSIANSLNWKE. A helical membrane pass occupies residues 391 to 411; that stretch reads FSFVQSTLGFVALMLSTMHTL. Gln395 provides a ligand contact to FAD. His409 lines the heme b pocket. The Vesicular portion of the chain corresponds to 412 to 433; sequence TYGWTRAFEENHYKFYLPPTFT. The chain crosses the membrane as a helical span at residues 434–454; sequence LTLLLPCVIILAKGLFLLPCL. Topologically, residues 455 to 488 are cytoplasmic; sequence SHRLTKIRRGWERDGAVKFMLPAGHTQGEKTSHV. Ser486 bears the Phosphoserine mark.

This sequence belongs to the STEAP family. In terms of assembly, homodimer. Interacts with BNIP3L, MYT1, RHBDL4/RHBDD1 and TCTP. FAD is required as a cofactor. It depends on heme b as a cofactor. In terms of processing, proteolytically cleaved by RHBDL4/RHBDD1. RHBDL4/RHBDD1-induced cleavage occurs at multiple sites in a glycosylation-independent manner. Glycosylated.

It is found in the endosome membrane. The enzyme catalyses 2 Fe(2+) + NADP(+) + H(+) = 2 Fe(3+) + NADPH. It catalyses the reaction 2 Cu(+) + NADP(+) + H(+) = 2 Cu(2+) + NADPH. Functionally, integral membrane protein that functions as a NADPH-dependent ferric-chelate reductase, using NADPH from one side of the membrane to reduce a Fe(3+) chelate that is bound on the other side of the membrane. Mediates sequential transmembrane electron transfer from NADPH to FAD and onto heme, and finally to the Fe(3+) chelate. Can also reduce Cu(2+) to Cu(1+). Mediates efficient transferrin-dependent iron uptake in erythroid cells. May play a role downstream of p53/TP53 to interface apoptosis and cell cycle progression. Indirectly involved in exosome secretion by facilitating the secretion of proteins such as TCTP. This chain is Metalloreductase STEAP3 (Steap3), found in Rattus norvegicus (Rat).